Here is a 494-residue protein sequence, read N- to C-terminus: Aspartyl/glutamyl-tRNA(Asn/Gln) amidotransferase subunit B (494 aa).

The protein belongs to the GatB/GatE family. GatB subfamily. As to quaternary structure, heterotrimer of A, B and C subunits.

It catalyses the reaction L-glutamyl-tRNA(Gln) + L-glutamine + ATP + H2O = L-glutaminyl-tRNA(Gln) + L-glutamate + ADP + phosphate + H(+). The catalysed reaction is L-aspartyl-tRNA(Asn) + L-glutamine + ATP + H2O = L-asparaginyl-tRNA(Asn) + L-glutamate + ADP + phosphate + 2 H(+). Allows the formation of correctly charged Asn-tRNA(Asn) or Gln-tRNA(Gln) through the transamidation of misacylated Asp-tRNA(Asn) or Glu-tRNA(Gln) in organisms which lack either or both of asparaginyl-tRNA or glutaminyl-tRNA synthetases. The reaction takes place in the presence of glutamine and ATP through an activated phospho-Asp-tRNA(Asn) or phospho-Glu-tRNA(Gln). The protein is Aspartyl/glutamyl-tRNA(Asn/Gln) amidotransferase subunit B of Synechococcus sp. (strain CC9902).